Here is a 518-residue protein sequence, read N- to C-terminus: Crotonobetaine/carnitine--CoA ligase (518 aa).

Belongs to the ATP-dependent AMP-binding enzyme family.

The enzyme catalyses 4-(trimethylamino)butanoate + ATP + CoA = 4-(trimethylamino)butanoyl-CoA + AMP + diphosphate. The catalysed reaction is crotonobetaine + ATP + CoA = crotonobetainyl-CoA + AMP + diphosphate. It carries out the reaction (R)-carnitine + ATP + CoA = (R)-carnitinyl-CoA + AMP + diphosphate. The protein operates within amine and polyamine metabolism; carnitine metabolism. In terms of biological role, catalyzes the transfer of CoA to carnitine, generating the initial carnitinyl-CoA needed for the CaiB reaction cycle. Also has activity toward crotonobetaine and gamma-butyrobetaine. This chain is Crotonobetaine/carnitine--CoA ligase, found in Proteus sp. (strain LE138).